The sequence spans 475 residues: Rho GTPase-activating protein 15 (475 aa).

Residues 1-22 are disordered; sequence MERSTTSDTASEKPNPSHSTGA. Positions 80–190 constitute a PH domain; that stretch reads VVEKEGYLLK…WFHAIKNAID (111 aa). Residues 281-470 enclose the Rho-GAP domain; it reads SHLHLVCEHE…LMLSEYSKIF (190 aa).

Its subcellular location is the cytoplasm. The protein localises to the membrane. Its function is as follows. GTPase activator for the Rho-type GTPases by converting them to an inactive GDP-bound state. The protein is Rho GTPase-activating protein 15 (ARHGAP15) of Gallus gallus (Chicken).